A 92-amino-acid polypeptide reads, in one-letter code: Large ribosomal subunit protein bL28 (92 aa).

This sequence belongs to the bacterial ribosomal protein bL28 family.

This is Large ribosomal subunit protein bL28 from Borreliella burgdorferi (strain ATCC 35210 / DSM 4680 / CIP 102532 / B31) (Borrelia burgdorferi).